The chain runs to 452 residues: tRNA modification GTPase MnmE (452 aa).

3 residues coordinate (6S)-5-formyl-5,6,7,8-tetrahydrofolate: arginine 24, glutamate 81, and lysine 120. In terms of domain architecture, TrmE-type G spans 217 to 373 (GIKTAIVGKT…LIMKIEQMHI (157 aa)). Asparagine 227 is a binding site for K(+). GTP is bound by residues 227–232 (NVGKSS), 246–252 (TDIHGTT), and 271–274 (DTAG). Position 231 (serine 231) interacts with Mg(2+). K(+) is bound by residues threonine 246, isoleucine 248, and threonine 251. Residue threonine 252 participates in Mg(2+) binding. A (6S)-5-formyl-5,6,7,8-tetrahydrofolate-binding site is contributed by lysine 452.

This sequence belongs to the TRAFAC class TrmE-Era-EngA-EngB-Septin-like GTPase superfamily. TrmE GTPase family. In terms of assembly, homodimer. Heterotetramer of two MnmE and two MnmG subunits. It depends on K(+) as a cofactor.

It localises to the cytoplasm. Exhibits a very high intrinsic GTPase hydrolysis rate. Involved in the addition of a carboxymethylaminomethyl (cmnm) group at the wobble position (U34) of certain tRNAs, forming tRNA-cmnm(5)s(2)U34. In Mesoplasma florum (strain ATCC 33453 / NBRC 100688 / NCTC 11704 / L1) (Acholeplasma florum), this protein is tRNA modification GTPase MnmE.